Reading from the N-terminus, the 33-residue chain is Neutrophil defensin 1 (33 aa).

3 cysteine pairs are disulfide-bonded: Cys-3/Cys-31, Cys-5/Cys-20, and Cys-10/Cys-30.

It belongs to the alpha-defensin family.

The protein resides in the secreted. Anti-fungal and bactericidal activity, greater against Gram-positive bacteria. This is Neutrophil defensin 1 from Mesocricetus auratus (Golden hamster).